Consider the following 416-residue polypeptide: MNDRFRIRKLKGYEIIDSRANRTIRVRVETYDGIVGFGDAPAGASKGANEAVELKDKNGRVIDAVELVNTVLSDSLKDYDVRRQRVIDTTLIRLDGTQNKSRIGGNTMIATSIAVLKTASRALGQEYFEYIGGPRAKYIPMPLLNILNGGLHAGNNLKIQEFIIIPKNFDKFTEAIQASIEVYKRLKDLITERYGKIYTALGDEGGFSPPLEKTMDALDLVYTSIKSLGYEDKIFMGMDAAASNFFHESHYELDGKRYTAGELIDYYKQLADMYPLMYIEDPFEENDYDSFSQLQSKLKKTIVTGDDLYVTNIEYLKKGIERMSSKGTIVKPNQIGTITETLDYIDFARRNAVKTIVSHRSGETEDSIIADLAVGTQSEFIKTGAPSRGERTSKYNRLIEIELDYGLEFYGKNFYL.

Gln160 serves as a coordination point for (2R)-2-phosphoglycerate. Residue Glu204 is the Proton donor of the active site. 3 residues coordinate Mg(2+): Asp239, Glu280, and Asp306. Residues Lys331, Arg360, Ser361, and Lys382 each contribute to the (2R)-2-phosphoglycerate site. Lys331 (proton acceptor) is an active-site residue.

This sequence belongs to the enolase family. It depends on Mg(2+) as a cofactor.

Its subcellular location is the cytoplasm. The protein resides in the secreted. The protein localises to the cell surface. It carries out the reaction (2R)-2-phosphoglycerate = phosphoenolpyruvate + H2O. The protein operates within carbohydrate degradation; glycolysis; pyruvate from D-glyceraldehyde 3-phosphate: step 4/5. Functionally, catalyzes the reversible conversion of 2-phosphoglycerate (2-PG) into phosphoenolpyruvate (PEP). It is essential for the degradation of carbohydrates via glycolysis. This Sulfolobus acidocaldarius (strain ATCC 33909 / DSM 639 / JCM 8929 / NBRC 15157 / NCIMB 11770) protein is Enolase.